We begin with the raw amino-acid sequence, 405 residues long: Diaminopimelate decarboxylase (405 aa).

At lysine 46 the chain carries N6-(pyridoxal phosphate)lysine. Pyridoxal 5'-phosphate-binding positions include glycine 225 and 259 to 262; that span reads EPGR. Substrate-binding residues include arginine 262, arginine 298, and tyrosine 302. Catalysis depends on cysteine 329, which acts as the Proton donor. Glutamate 330 and tyrosine 358 together coordinate substrate. Residue tyrosine 358 coordinates pyridoxal 5'-phosphate.

It belongs to the Orn/Lys/Arg decarboxylase class-II family. LysA subfamily. As to quaternary structure, homodimer. It depends on pyridoxal 5'-phosphate as a cofactor.

The catalysed reaction is meso-2,6-diaminopimelate + H(+) = L-lysine + CO2. The protein operates within amino-acid biosynthesis; L-lysine biosynthesis via DAP pathway; L-lysine from DL-2,6-diaminopimelate: step 1/1. Functionally, specifically catalyzes the decarboxylation of meso-diaminopimelate (meso-DAP) to L-lysine. The polypeptide is Diaminopimelate decarboxylase (Helicobacter pylori (strain J99 / ATCC 700824) (Campylobacter pylori J99)).